Reading from the N-terminus, the 388-residue chain is Chaperone protein DnaJ (388 aa).

Positions 5-70 (DYYTTLNISN…KKRNLYDQYG (66 aa)) constitute a J domain. The CR-type zinc finger occupies 135–213 (GIKKEIRIPK…CFGQGRIKKS (79 aa)). Residues C148, C151, C165, C168, C187, C190, C201, and C204 each contribute to the Zn(2+) site. CXXCXGXG motif repeat units follow at residues 148 to 155 (CQSCYGYG), 165 to 172 (CTSCNGHG), 187 to 194 (CSTCRGTG), and 201 to 208 (CKICFGQG).

The protein belongs to the DnaJ family. Homodimer. Zn(2+) serves as cofactor.

The protein localises to the cytoplasm. In terms of biological role, participates actively in the response to hyperosmotic and heat shock by preventing the aggregation of stress-denatured proteins and by disaggregating proteins, also in an autonomous, DnaK-independent fashion. Unfolded proteins bind initially to DnaJ; upon interaction with the DnaJ-bound protein, DnaK hydrolyzes its bound ATP, resulting in the formation of a stable complex. GrpE releases ADP from DnaK; ATP binding to DnaK triggers the release of the substrate protein, thus completing the reaction cycle. Several rounds of ATP-dependent interactions between DnaJ, DnaK and GrpE are required for fully efficient folding. Also involved, together with DnaK and GrpE, in the DNA replication of plasmids through activation of initiation proteins. The sequence is that of Chaperone protein DnaJ from Buchnera aphidicola subsp. Cinara cedri (strain Cc).